The primary structure comprises 115 residues: Putative ethidium bromide resistance protein (115 aa).

The next 4 helical transmembrane spans lie at 4-21 (WLFL…TSAL), 30-47 (LAPS…FYFL), 58-79 (VAYA…WLLH), and 85-104 (AWGF…ARSP).

This sequence belongs to the drug/metabolite transporter (DMT) superfamily. Small multidrug resistance (SMR) (TC 2.A.7.1) family.

Its subcellular location is the cell membrane. In terms of biological role, one of the determinants for resistance to ethidium bromide and quaternary ammonium compounds. The protein is Putative ethidium bromide resistance protein (ebr) of Escherichia coli.